The sequence spans 384 residues: Prokineticin receptor 2 (384 aa).

Residues 1–53 are Extracellular-facing; the sequence is MAAQNGNASFPANFSIPQEHASSLPFNFSYDDYDLPLDEDEDMTKTQTFFAAK. Residues Asn-7, Asn-13, and Asn-27 are each glycosylated (N-linked (GlcNAc...) asparagine). A helical transmembrane segment spans residues 54–74; the sequence is IVIGVALVGIMLTCGIGNFVF. The Cytoplasmic portion of the chain corresponds to 75–89; sequence ITALTRYKKLRNLTN. The chain crosses the membrane as a helical span at residues 90-110; that stretch reads LLIANLAISDFLVAIICCPFE. Residues 111–137 are Extracellular-facing; the sequence is MDYYVVHQLSWEHGHVLCACINYLRTV. An intrachain disulfide couples Cys-128 to Cys-208. Residues 138-158 traverse the membrane as a helical segment; the sequence is SLYVSTNALLAIAIDRYLAIV. At 159–171 the chain is on the cytoplasmic side; that stretch reads HPLKPRMNYQTAS. Residues 172-192 traverse the membrane as a helical segment; it reads FLIALVWMVSILISIPSAYFT. The Extracellular portion of the chain corresponds to 193 to 223; that stretch reads KETVLFIVKNQKKIFCGQVWPVDQQLYYKSY. The helical transmembrane segment at 224 to 244 threads the bilayer; the sequence is FLFVFGIEFLGPVFTMTLCYA. The Cytoplasmic portion of the chain corresponds to 245-273; sequence RISRELWFKAVPGFQTEQIRKRLRCRRKT. The chain crosses the membrane as a helical span at residues 274–294; sequence VLVLMCILTAYVLCWAPFYGF. The Extracellular portion of the chain corresponds to 295–313; sequence TIVRDFFPTVFVKEKHYLT. A helical transmembrane segment spans residues 314–334; the sequence is AFYVVECIAMSNSMINTVCFV. Residues 335 to 384 are Cytoplasmic-facing; that stretch reads TVKNSTMKYFKKMLLLHWRPSHHGSKSSADLDLKTSRLPATEEVDCIRLK.

Belongs to the G-protein coupled receptor 1 family. In terms of assembly, homodimer.

Its subcellular location is the cell membrane. Its function is as follows. Receptor for prokineticin 2. Exclusively coupled to the G(q) subclass of heteromeric G proteins. Activation leads to mobilization of calcium, stimulation of phosphoinositide turnover and activation of p44/p42 mitogen-activated protein kinase. The sequence is that of Prokineticin receptor 2 (PROKR2) from Bos taurus (Bovine).